We begin with the raw amino-acid sequence, 336 residues long: Galactinol synthase 6 (336 aa).

Lysine 106 is an active-site residue. Mn(2+)-binding residues include aspartate 122, aspartate 124, and histidine 260.

The protein belongs to the glycosyltransferase 8 family. Galactosyltransferase subfamily. A divalent metal cation serves as cofactor.

The protein localises to the cytoplasm. It carries out the reaction myo-inositol + UDP-alpha-D-galactose = alpha-D-galactosyl-(1-&gt;3)-1D-myo-inositol + UDP + H(+). In terms of biological role, galactinol synthase involved in the biosynthesis of raffinose family oligosaccharides (RFOs) that function as osmoprotectants. May promote plant stress tolerance. The polypeptide is Galactinol synthase 6 (GOLS6) (Arabidopsis thaliana (Mouse-ear cress)).